The sequence spans 400 residues: NADH-quinone oxidoreductase subunit D (400 aa).

The protein belongs to the complex I 49 kDa subunit family. In terms of assembly, NDH-1 is composed of 14 different subunits. Subunits NuoB, C, D, E, F, and G constitute the peripheral sector of the complex.

The protein resides in the cell inner membrane. The catalysed reaction is a quinone + NADH + 5 H(+)(in) = a quinol + NAD(+) + 4 H(+)(out). Functionally, NDH-1 shuttles electrons from NADH, via FMN and iron-sulfur (Fe-S) centers, to quinones in the respiratory chain. The immediate electron acceptor for the enzyme in this species is believed to be a menaquinone. Couples the redox reaction to proton translocation (for every two electrons transferred, four hydrogen ions are translocated across the cytoplasmic membrane), and thus conserves the redox energy in a proton gradient. The polypeptide is NADH-quinone oxidoreductase subunit D (Chlorobaculum tepidum (strain ATCC 49652 / DSM 12025 / NBRC 103806 / TLS) (Chlorobium tepidum)).